Consider the following 135-residue polypeptide: ATP synthase epsilon chain (135 aa).

It belongs to the ATPase epsilon chain family. In terms of assembly, F-type ATPases have 2 components, CF(1) - the catalytic core - and CF(0) - the membrane proton channel. CF(1) has five subunits: alpha(3), beta(3), gamma(1), delta(1), epsilon(1). CF(0) has three main subunits: a, b and c.

Its subcellular location is the cell inner membrane. Functionally, produces ATP from ADP in the presence of a proton gradient across the membrane. The sequence is that of ATP synthase epsilon chain from Chelativorans sp. (strain BNC1).